We begin with the raw amino-acid sequence, 352 residues long: Ion-translocating oxidoreductase complex subunit D (352 aa).

Transmembrane regions (helical) follow at residues 20 to 40, 42 to 62, 68 to 88, 89 to 109, and 123 to 143; these read IMLLVLLAAIPGIATQLWFFG, GTLVQIILAVISALSAEALVL, PIAAILKDNSALLTGLLLAVS, IPPLAPWWMVVLGTVFAVIIA, and PAMIGYVVLLISFPVQMTNWL. Thr-187 is modified (FMN phosphoryl threonine). Transmembrane regions (helical) follow at residues 217 to 237, 244 to 264, 267 to 287, 301 to 321, and 322 to 342; these read GAGWQWVNLAWLAGGVWLLAI, IPVSFLVSLALCATLGWLFAP, LASPQIHMLSGATMLGAFFIL, LIFGALAGVLVWLIRSFGGYP, and DGVAFAVLLANITVPLIDYYT.

It belongs to the NqrB/RnfD family. As to quaternary structure, the complex is composed of six subunits: RsxA, RsxB, RsxC, RsxD, RsxE and RsxG. The cofactor is FMN.

It is found in the cell inner membrane. Its function is as follows. Part of a membrane-bound complex that couples electron transfer with translocation of ions across the membrane. Required to maintain the reduced state of SoxR. The polypeptide is Ion-translocating oxidoreductase complex subunit D (Escherichia fergusonii (strain ATCC 35469 / DSM 13698 / CCUG 18766 / IAM 14443 / JCM 21226 / LMG 7866 / NBRC 102419 / NCTC 12128 / CDC 0568-73)).